Reading from the N-terminus, the 334-residue chain is Putative heat shock protein HSP 90-alpha A5 (334 aa).

The disordered stretch occupies residues 55–107; the sequence is KRNKQVSDAEAEKKEDKRKKKKESNDKPEIEDVGSDEEEEKKDADKKKKKSKE. Residues 59–69 show a composition bias toward basic and acidic residues; it reads QVSDAEAEKKE. The span at 85–94 shows a compositional bias: acidic residues; the sequence is EDVGSDEEEE. Ser89 is modified (phosphoserine). Positions 234-267 form a coiled coil; the sequence is LELPEDEEEKKKQEEKKTKFENLCKIMKDMLEKK. Residues 314-334 are disordered; the sequence is EMPPLRGGDDTSRMEEVGGSG. A compositionally biased stretch (basic and acidic residues) spans 320–334; it reads GGDDTSRMEEVGGSG. Residues 327-331 carry the TPR repeat-binding motif; sequence MEEVG.

It belongs to the heat shock protein 90 family. Homodimer.

The protein localises to the cytoplasm. Its function is as follows. Putative molecular chaperone that may promote the maturation, structural maintenance and proper regulation of specific target proteins. In Homo sapiens (Human), this protein is Putative heat shock protein HSP 90-alpha A5 (HSP90AA5P).